A 338-amino-acid polypeptide reads, in one-letter code: Tripartite motif-containing protein 44 (338 aa).

Disordered regions lie at residues 1 to 25 (MASG…EPDE) and 72 to 162 (ARGD…EFDP). Residues 95 to 162 (EAGEGIESEE…ETEAESEFDP (68 aa)) show a composition bias toward acidic residues. The stretch at 109-153 (EEESETEEESEDESEEDSEEEMEDEQESEAEEDNQEEGESEAEGE) forms a coiled coil. The B box-type zinc-finger motif lies at 171–212 (VAKRKCPDHGLDLSTYCQEDKQLICVLCPVIGAHHGHHLSTL). Positions 176, 179, 198, and 204 each coordinate Zn(2+). A coiled-coil region spans residues 257–322 (QQEFKKVQKV…QLDTSNESAE (66 aa)). Residues 307-338 (MAQAKEQLDTSNESAEPKAEGDEEEPGGTDED) form a disordered region. Residues 327-338 (GDEEEPGGTDED) are compositionally biased toward acidic residues.

In terms of assembly, interacts (via coiled coil) with TRIM17 (via coiled coil).

In terms of biological role, may play a role in the process of differentiation and maturation of neuronal cells. May regulate the activity of TRIM17. Is a negative regulator of PAX6 expression. This Bos taurus (Bovine) protein is Tripartite motif-containing protein 44 (TRIM44).